The chain runs to 360 residues: MAKDDKKKALDIALKKIEKDFGKGAVMRMGEKVDTQISTIPSGSLALDAALGVGGYPRGRIIEVYGPESSGKTTVALHAVAEVQKRGGTAAYIDAENAMDPAYAEALGVDIDSLILSQPNTGEEGLQIADTLIASGAIDILVVDSVAALVPRAEIDGDMGDSHVGLQARLMSQALRKLSGNISKTKTIAVFINQIREKVGVMFGNPETTPGGRALKFYSTIRLEVRRAEQIKQGSDVIGNRVKLKVVKNKVAPPFKVAEVDIMYGKGISQTGELIDMAADKDIIKKAGSWYSYGDDRIGQGRENAKQYLEEHPDVYEEVKEKVREAYGIDAKAIEERENPEKVKQDKEVPVNKDASDEKK.

Residue 66–73 coordinates ATP; that stretch reads GPESSGKT. Positions 330–360 are disordered; the sequence is DAKAIEERENPEKVKQDKEVPVNKDASDEKK.

Belongs to the RecA family.

It is found in the cytoplasm. Its function is as follows. Can catalyze the hydrolysis of ATP in the presence of single-stranded DNA, the ATP-dependent uptake of single-stranded DNA by duplex DNA, and the ATP-dependent hybridization of homologous single-stranded DNAs. It interacts with LexA causing its activation and leading to its autocatalytic cleavage. This Lactobacillus johnsonii (strain CNCM I-12250 / La1 / NCC 533) protein is Protein RecA.